A 235-amino-acid chain; its full sequence is Cobalt transport protein CbiM (235 aa).

6 helical membrane-spanning segments follow: residues 6-26 (GVLPPVQCAIWFAAAAPFVVH), 43-63 (LLLATAGACTFLLSSIKLPSV), 85-105 (MAFMGLIVLIFQALLLAHGGI), 108-128 (LGANTFSMAIVGPWVGYGAYV), 133-153 (LGGPLALGIFLAMFLSDLSTY), and 181-201 (IFAISQIPLSVAEGILGILLF).

This sequence belongs to the CbiM family. As to quaternary structure, forms an energy-coupling factor (ECF) transporter complex composed of an ATP-binding protein (A component, CbiO), a transmembrane protein (T component, CbiQ) and 2 possible substrate-capture proteins (S components, CbiM and CbiN) of unknown stoichimetry.

Its subcellular location is the cell membrane. Its pathway is cofactor biosynthesis; adenosylcobalamin biosynthesis. Functionally, part of the energy-coupling factor (ECF) transporter complex CbiMNOQ involved in cobalt import. In Propionibacterium freudenreichii subsp. shermanii (strain ATCC 9614 / DSM 4902 / CIP 103027 / NCIMB 8099 / CIRM-BIA1), this protein is Cobalt transport protein CbiM.